A 449-amino-acid polypeptide reads, in one-letter code: MKSYEVNFDGLVGPTHNYGGLSYGNVASQSNSQQASNPREAARQGLAKMKALADMGFKQGVLAPQERPDVAALRRLGFSGSDADVIQRAAREAMPLLVASCSASSMWVANAATVSPSADTADGRVHFTAANLNCKYHRSIEHPTTSRVLGAMFNNEKHFAHHAALPAVAQFGDEGAANHTRFCRAYGEAGVEFFVYGRSAFDSRYPAPQKYPARQTLEASQAVARLHGLSDDGVVYAQQNPAVIDQGVFHNDVISVGNGEVLFYHEEAFLETDAVLGQLRAKLASKGGNFQAICVPRAAVAVEDAVRSYLFNSQLLSRDDGSMLLVVPEECRNNERVWAYLGQLTSQGGPVKEVKVFDLKQSMQNGGGPACLRLRVALKEAELAAVNQGVIMTAPLYDTLLQWVDRHYRDRLGEADLADPQLLVECRTALDELTQILKLGSVYPFQRQP.

Residues 19 to 28 (GGLSYGNVAS), N110, and 137 to 138 (HR) each bind substrate. The tract at residues 23-43 (YGNVASQSNSQQASNPREAAR) is disordered. Positions 27–37 (ASQSNSQQASN) are enriched in low complexity. Residue E174 is part of the active site. R214 serves as a coordination point for substrate. H250 is an active-site residue. Substrate is bound by residues D252 and N365. C371 serves as the catalytic Nucleophile.

The protein belongs to the succinylarginine dihydrolase family. As to quaternary structure, homodimer.

The enzyme catalyses N(2)-succinyl-L-arginine + 2 H2O + 2 H(+) = N(2)-succinyl-L-ornithine + 2 NH4(+) + CO2. Its pathway is amino-acid degradation; L-arginine degradation via AST pathway; L-glutamate and succinate from L-arginine: step 2/5. Functionally, catalyzes the hydrolysis of N(2)-succinylarginine into N(2)-succinylornithine, ammonia and CO(2). The polypeptide is N-succinylarginine dihydrolase (Pseudomonas putida (strain ATCC 700007 / DSM 6899 / JCM 31910 / BCRC 17059 / LMG 24140 / F1)).